The primary structure comprises 166 residues: MGEPLGLLQVTVIQGKKLVIRDFKSSDPYVIVKLGNESAKTKVINNCLNPVWNEELNFTLKDPAAVLALEVFDKDRFKADDKMGHASLSLQPLISVARLRHVVRVSSGETTLRKVLPDPENCVSRESTISCIDGEVVQSVWLRLCAVESGEIELKIKLIDPPGTNK.

M1 is modified (N-acetylmethionine). The C2 domain maps to 1–103 (MGEPLGLLQV…ISVARLRHVV (103 aa)). N-acetylglycine; in Protein C2-DOMAIN ABA-RELATED 11, N-terminally processed is present on G2. Ca(2+) contacts are provided by R21, D22, D27, D73, K74, D75, and D81.

This sequence belongs to the plant CAR protein family. As to quaternary structure, binds to PYR/PYL/RCAR abscisic acid intracellular receptors in an ABA-independent manner, both at the plasma membrane and in the nucleus.

It is found in the cell membrane. Its subcellular location is the nucleus. In terms of biological role, stimulates the GTPase/ATPase activities of Obg-like ATPases. Mediates the transient calcium-dependent interaction of PYR/PYL/RCAR abscisic acid (ABA) receptors with the plasma membrane and thus regulates ABA sensitivity. This chain is Protein C2-DOMAIN ABA-RELATED 11, found in Arabidopsis thaliana (Mouse-ear cress).